The chain runs to 157 residues: Biotin carboxyl carrier protein of acetyl-CoA carboxylase (157 aa).

Residues 80–156 enclose the Biotinyl-binding domain; it reads YATIVSPMVG…DCGQALMKVE (77 aa). N6-biotinyllysine is present on K122.

Its subcellular location is the plastid. The protein resides in the chloroplast. It participates in lipid metabolism; fatty acid biosynthesis. In terms of biological role, this protein is a component of the acetyl coenzyme A carboxylase complex; first, biotin carboxylase catalyzes the carboxylation of the carrier protein and then the transcarboxylase transfers the carboxyl group to form malonyl-CoA. This chain is Biotin carboxyl carrier protein of acetyl-CoA carboxylase (accB), found in Porphyra purpurea (Red seaweed).